Here is a 251-residue protein sequence, read N- to C-terminus: Probable-ribose 5-phosphate isomerase (251 aa).

This sequence belongs to the ribose 5-phosphate isomerase family.

It carries out the reaction aldehydo-D-ribose 5-phosphate = D-ribulose 5-phosphate. Its pathway is carbohydrate degradation; pentose phosphate pathway; D-ribose 5-phosphate from D-ribulose 5-phosphate (non-oxidative stage): step 1/1. This chain is Probable-ribose 5-phosphate isomerase (rpia-1), found in Caenorhabditis elegans.